A 280-amino-acid polypeptide reads, in one-letter code: DegV domain-containing protein CA_C1624 (280 aa).

The DegV domain occupies 4–279 (IALITDSTSD…PGLLGVVIFK (276 aa)). Hexadecanoate-binding residues include Thr60 and Ser93.

May bind long-chain fatty acids, such as palmitate, and may play a role in lipid transport or fatty acid metabolism. The chain is DegV domain-containing protein CA_C1624 from Clostridium acetobutylicum (strain ATCC 824 / DSM 792 / JCM 1419 / IAM 19013 / LMG 5710 / NBRC 13948 / NRRL B-527 / VKM B-1787 / 2291 / W).